Here is a 371-residue protein sequence, read N- to C-terminus: 3-isopropylmalate dehydrogenase (371 aa).

77-90 provides a ligand contact to NAD(+); sequence GPKWDDNPPHLRPE. Substrate is bound by residues Arg-97, Arg-107, Arg-135, and Asp-224. Residues Asp-224, Asp-248, and Asp-252 each contribute to the Mg(2+) site. 282-294 is a binding site for NAD(+); sequence GSAPDIAGMNKAN.

This sequence belongs to the isocitrate and isopropylmalate dehydrogenases family. LeuB type 1 subfamily. Homodimer. The cofactor is Mg(2+). It depends on Mn(2+) as a cofactor.

The protein localises to the cytoplasm. It carries out the reaction (2R,3S)-3-isopropylmalate + NAD(+) = 4-methyl-2-oxopentanoate + CO2 + NADH. Its pathway is amino-acid biosynthesis; L-leucine biosynthesis; L-leucine from 3-methyl-2-oxobutanoate: step 3/4. In terms of biological role, catalyzes the oxidation of 3-carboxy-2-hydroxy-4-methylpentanoate (3-isopropylmalate) to 3-carboxy-4-methyl-2-oxopentanoate. The product decarboxylates to 4-methyl-2 oxopentanoate. The chain is 3-isopropylmalate dehydrogenase from Geobacillus kaustophilus (strain HTA426).